The following is a 79-amino-acid chain: Cytochrome b (79 aa).

3 helical membrane-spanning segments follow: residues 1–7, 31–52, and 67–79; these read SALFLAM, WLIR…YLHI, and WNIG…LTMA. Residues H37 and H51 each coordinate heme b.

It belongs to the cytochrome b family. The cytochrome bc1 complex contains 11 subunits: 3 respiratory subunits (MT-CYB, CYC1 and UQCRFS1), 2 core proteins (UQCRC1 and UQCRC2) and 6 low-molecular weight proteins (UQCRH/QCR6, UQCRB/QCR7, UQCRQ/QCR8, UQCR10/QCR9, UQCR11/QCR10 and a cleavage product of UQCRFS1). This cytochrome bc1 complex then forms a dimer. Heme b serves as cofactor.

The protein localises to the mitochondrion inner membrane. Component of the ubiquinol-cytochrome c reductase complex (complex III or cytochrome b-c1 complex) that is part of the mitochondrial respiratory chain. The b-c1 complex mediates electron transfer from ubiquinol to cytochrome c. Contributes to the generation of a proton gradient across the mitochondrial membrane that is then used for ATP synthesis. In Dipodomys californicus (California kangaroo rat), this protein is Cytochrome b (MT-CYB).